Reading from the N-terminus, the 235-residue chain is 2,3,4,5-tetrahydropyridine-2,6-dicarboxylate N-acetyltransferase (235 aa).

Belongs to the transferase hexapeptide repeat family. DapH subfamily.

It carries out the reaction (S)-2,3,4,5-tetrahydrodipicolinate + acetyl-CoA + H2O = L-2-acetamido-6-oxoheptanedioate + CoA. It functions in the pathway amino-acid biosynthesis; L-lysine biosynthesis via DAP pathway; LL-2,6-diaminopimelate from (S)-tetrahydrodipicolinate (acetylase route): step 1/3. Functionally, catalyzes the transfer of an acetyl group from acetyl-CoA to tetrahydrodipicolinate. This chain is 2,3,4,5-tetrahydropyridine-2,6-dicarboxylate N-acetyltransferase, found in Exiguobacterium sp. (strain ATCC BAA-1283 / AT1b).